The following is a 294-amino-acid chain: N-acetylmuramic acid 6-phosphate etherase (294 aa).

One can recognise an SIS domain in the interval 54 to 217 (VIASFRKGGR…STTSMIGVGK (164 aa)). The Proton donor role is filled by E82. E113 is a catalytic residue.

It belongs to the GCKR-like family. MurNAc-6-P etherase subfamily. Homodimer.

The catalysed reaction is N-acetyl-D-muramate 6-phosphate + H2O = N-acetyl-D-glucosamine 6-phosphate + (R)-lactate. It participates in amino-sugar metabolism; N-acetylmuramate degradation. In terms of biological role, specifically catalyzes the cleavage of the D-lactyl ether substituent of MurNAc 6-phosphate, producing GlcNAc 6-phosphate and D-lactate. The chain is N-acetylmuramic acid 6-phosphate etherase from Exiguobacterium sp. (strain ATCC BAA-1283 / AT1b).